We begin with the raw amino-acid sequence, 695 residues long: Probable glutamine--tRNA ligase (695 aa).

The short motif at 201–211 is the 'HIGH' region element; that stretch reads PEPNGILHIGH. ATP contacts are provided by residues 202–204 and 208–214; these read EPN and HIGHAKA. L-glutamine contacts are provided by D234 and Y391. Residues T410, 439–440, and 447–449 each bind ATP; these read RL and LSK. Positions 446–450 match the 'KMSKS' region motif; sequence VLSKR.

This sequence belongs to the class-I aminoacyl-tRNA synthetase family.

It carries out the reaction tRNA(Gln) + L-glutamine + ATP = L-glutaminyl-tRNA(Gln) + AMP + diphosphate. This is Probable glutamine--tRNA ligase from Vairimorpha ceranae (strain BRL01) (Microsporidian parasite).